Here is a 180-residue protein sequence, read N- to C-terminus: Bifunctional protein PyrR (180 aa).

Positions 101–113 match the PRPP-binding motif; that stretch reads VILVDDVLYTGRT.

It belongs to the purine/pyrimidine phosphoribosyltransferase family. PyrR subfamily. In terms of assembly, homodimer and homohexamer; in equilibrium.

It carries out the reaction UMP + diphosphate = 5-phospho-alpha-D-ribose 1-diphosphate + uracil. Its function is as follows. Regulates transcriptional attenuation of the pyrimidine nucleotide (pyr) operon by binding in a uridine-dependent manner to specific sites on pyr mRNA. This disrupts an antiterminator hairpin in the RNA and favors formation of a downstream transcription terminator, leading to a reduced expression of downstream genes. Also displays a weak uracil phosphoribosyltransferase activity which is not physiologically significant. In Bacillus cytotoxicus (strain DSM 22905 / CIP 110041 / 391-98 / NVH 391-98), this protein is Bifunctional protein PyrR.